Reading from the N-terminus, the 124-residue chain is Putative outer membrane protein CT_569 (124 aa).

An N-terminal signal peptide occupies residues 1 to 31; the sequence is MKKTKKRKQSITLVEMMVVITLIGIIGGALA.

It is found in the cell outer membrane. The sequence is that of Putative outer membrane protein CT_569 from Chlamydia trachomatis serovar D (strain ATCC VR-885 / DSM 19411 / UW-3/Cx).